Consider the following 102-residue polypeptide: Large ribosomal subunit protein uL24 (102 aa).

The protein belongs to the universal ribosomal protein uL24 family. Part of the 50S ribosomal subunit.

In terms of biological role, one of two assembly initiator proteins, it binds directly to the 5'-end of the 23S rRNA, where it nucleates assembly of the 50S subunit. Its function is as follows. One of the proteins that surrounds the polypeptide exit tunnel on the outside of the subunit. The polypeptide is Large ribosomal subunit protein uL24 (Alkaliphilus oremlandii (strain OhILAs) (Clostridium oremlandii (strain OhILAs))).